The following is a 65-amino-acid chain: MPKIKTNRGAAKRFKKTGTGKVKRAHAFTSHILTHKTSKRKRNLRQSNTVAAVDQKNICALIPYM.

Positions 1 to 23 (MPKIKTNRGAAKRFKKTGTGKVK) are disordered. A compositionally biased stretch (basic residues) spans 10-23 (AAKRFKKTGTGKVK).

Belongs to the bacterial ribosomal protein bL35 family.

This Trichlorobacter lovleyi (strain ATCC BAA-1151 / DSM 17278 / SZ) (Geobacter lovleyi) protein is Large ribosomal subunit protein bL35.